An 80-amino-acid chain; its full sequence is FXYD domain-containing ion transport regulator 7 (80 aa).

At 1-22 the chain is on the extracellular side; it reads MATPTQSPTNVPEETDPFFYDY. Residues T3, T5, and T9 are each glycosylated (O-linked (GlcNAc) threonine). A helical membrane pass occupies residues 23-45; that stretch reads ATVQTVGMTLATIMFVLGIIIIL. Residues 46–80 are Cytoplasmic-facing; that stretch reads SKKVKCRKADSRSESPTCKSCKSELPSSAPGGGGV. The interval 55–80 is disordered; sequence DSRSESPTCKSCKSELPSSAPGGGGV. At S73 the chain carries Phosphoserine.

It belongs to the FXYD family. Regulatory subunit of the sodium/potassium-transporting ATPase which is composed of a catalytic alpha subunit, a non-catalytic beta subunit and an additional regulatory subunit. The regulatory subunit, a member of the FXYD protein family, modulates the enzymatic activity in a tissue- and isoform-specific way by changing affinities of the Na+/K+-ATPase toward Na(+), K(+) or ATP. O-glycosylated; required for stabilization and translocation to the plasma membrane.

Its subcellular location is the cell membrane. In terms of biological role, associates with and regulates the activity of the sodium/potassium-transporting ATPase (NKA) which catalyzes the hydrolysis of ATP coupled with the exchange of Na(+) and K(+) ions across the plasma membrane. Reduces the apparent affinity for external K(+), an effect that depends on the presence of external Na(+) and voltage. Increases the apparent affinity for intracellular Na(+). In Mus musculus (Mouse), this protein is FXYD domain-containing ion transport regulator 7 (Fxyd7).